We begin with the raw amino-acid sequence, 174 residues long: Small ribosomal subunit protein bS16 (174 aa).

The tract at residues 81–174 (QRFTGEPAPP…DATTDATPSA (94 aa)) is disordered. The span at 87 to 97 (PAPPPMKTAPP) shows a compositional bias: pro residues. Positions 98-118 (KPDKKALFEAAAKEAAGEPRA) are enriched in basic and acidic residues. The segment covering 135 to 158 (ETTPAAEAAPDAAASADEPAGGAS) has biased composition (low complexity). Positions 160-174 (AAESQDATTDATPSA) are enriched in polar residues.

The protein belongs to the bacterial ribosomal protein bS16 family.

The chain is Small ribosomal subunit protein bS16 from Acidothermus cellulolyticus (strain ATCC 43068 / DSM 8971 / 11B).